A 558-amino-acid polypeptide reads, in one-letter code: Kelch-like protein 23 (558 aa).

The region spanning 36–104 is the BTB domain; that stretch reads TDITLQCPSG…AYTSQIEITK (69 aa). The region spanning 139–240 is the BACK domain; the sequence is CIGMHSFAEF…DPVYLKTALG (102 aa). Kelch repeat units follow at residues 274–320, 321–369, 370–416, 418–466, 467–508, and 510–557; these read TMYI…CLGP, NIYV…TLGG, CVYA…VLHE, IYVI…PFEN, KLYL…IMNG, and IYVT…CVYN.

In Mus musculus (Mouse), this protein is Kelch-like protein 23 (Klhl23).